A 163-amino-acid polypeptide reads, in one-letter code: Large ribosomal subunit protein bL17 (163 aa).

The span at 123–135 (AEASRATRASASK) shows a compositional bias: low complexity. The segment at 123 to 163 (AEASRATRASASKKAAEEAETEEVVEAPAEETATEEAAEEK) is disordered. Over residues 140–163 (EAETEEVVEAPAEETATEEAAEEK) the composition is skewed to acidic residues.

Belongs to the bacterial ribosomal protein bL17 family. Part of the 50S ribosomal subunit. Contacts protein L32.

In Corynebacterium glutamicum (strain ATCC 13032 / DSM 20300 / JCM 1318 / BCRC 11384 / CCUG 27702 / LMG 3730 / NBRC 12168 / NCIMB 10025 / NRRL B-2784 / 534), this protein is Large ribosomal subunit protein bL17.